We begin with the raw amino-acid sequence, 247 residues long: PF03932 family protein CutC (247 aa).

A compositionally biased stretch (polar residues) spans 205–222 (KSTRPSLMESNSSAQMGS). The interval 205–226 (KSTRPSLMESNSSAQMGSNDVD) is disordered.

Belongs to the CutC family.

Its subcellular location is the cytoplasm. The sequence is that of PF03932 family protein CutC from Vibrio atlanticus (strain LGP32) (Vibrio splendidus (strain Mel32)).